A 407-amino-acid chain; its full sequence is Rubber oxygenase (407 aa).

Positions 1–30 form a signal peptide, tat-type signal; sequence MDGFSRRRMLMTGGALGAVGALGAATRALA. Residue His198 coordinates heme.

This sequence belongs to the rubber oxygenase Lcp family. It depends on heme b as a cofactor. In terms of processing, exported by the Tat system. The position of the signal peptide cleavage has not been experimentally proven.

Its subcellular location is the secreted. It participates in biopolymer metabolism. Involved in the initial step of rubber degradation. Catalyzes the oxidative C-C cleavage of poly(cis-1,4-isoprene) in synthetic as well as in natural rubber by the addition of oxygen (O2) to the double bonds, leading to a mixture of oligonucleotide-isoprenoids with terminal keto and aldehyde groups (endo-type cleavage). The cleavage products are of different lengths, ranging from C20 (four isoprene units) to higher oligo-isoprenoids. Is not able to cleave low-molecular-weight substrate analogs with isoprenoid structure such as squalene (1,4-trans-isoprenoid), carotenoids, or alpha-tocopherol. In Streptomyces sp. (strain K30), this protein is Rubber oxygenase.